The following is a 183-amino-acid chain: UPF0316 protein EF_1609 (183 aa).

Transmembrane regions (helical) follow at residues 1–21 (MVVD…YITL), 35–55 (VIAP…LSMV), and 62–82 (PLNL…GIKI).

The protein belongs to the UPF0316 family.

It localises to the cell membrane. The chain is UPF0316 protein EF_1609 from Enterococcus faecalis (strain ATCC 700802 / V583).